A 735-amino-acid chain; its full sequence is 1,4-alpha-glucan branching enzyme GlgB 1 (735 aa).

The active-site Nucleophile is aspartate 418. Glutamate 471 acts as the Proton donor in catalysis.

Belongs to the glycosyl hydrolase 13 family. GlgB subfamily. As to quaternary structure, monomer.

The catalysed reaction is Transfers a segment of a (1-&gt;4)-alpha-D-glucan chain to a primary hydroxy group in a similar glucan chain.. It functions in the pathway glycan biosynthesis; glycogen biosynthesis. Functionally, catalyzes the formation of the alpha-1,6-glucosidic linkages in glycogen by scission of a 1,4-alpha-linked oligosaccharide from growing alpha-1,4-glucan chains and the subsequent attachment of the oligosaccharide to the alpha-1,6 position. The protein is 1,4-alpha-glucan branching enzyme GlgB 1 of Rhizobium etli (strain ATCC 51251 / DSM 11541 / JCM 21823 / NBRC 15573 / CFN 42).